Here is a 343-residue protein sequence, read N- to C-terminus: Lumican (343 aa).

The N-terminal stretch at 1–18 (MTLNSLPIFLVLISGIFC) is a signal peptide. Q19 is modified (pyrrolidone carboxylic acid). Residues Y20 and Y22 each carry the sulfotyrosine modification. An LRRNT domain is found at 31–69 (DPFGPSTAVCAPECNCPLSYPTAMYCDNLKLKTIPIVPS). LRR repeat units follow at residues 70-91 (GIKY…TFDN), 94-117 (DLQW…VFSK), 120-140 (NLKK…PLPK), 141-162 (TLDD…ALEG), 165-186 (NLTV…GAFK), 190-211 (SLLY…LPHS), 212-232 (LLML…YFQG), and 235-255 (TLQY…PGNV). N-linked (GlcNAc...) (keratan sulfate) asparagine glycosylation occurs at N91. N-linked (GlcNAc...) (keratan sulfate) asparagine glycosylation is present at N130. N-linked (GlcNAc...) (keratan sulfate) asparagine glycosylation occurs at N165. N-linked (GlcNAc...) (keratan sulfate) asparagine glycosylation is present at N257. LRR repeat units lie at residues 260 to 281 (SLVE…SENL), 282 to 301 (ENFY…SFCK), and 310 to 330 (KITH…PQEM). A disulfide bridge connects residues C300 and C333. N320 is a glycosylation site (N-linked (GlcNAc...) asparagine).

It belongs to the small leucine-rich proteoglycan (SLRP) family. SLRP class II subfamily. In terms of assembly, binds to laminin. In terms of processing, contains keratan sulfate.

The protein localises to the secreted. It is found in the extracellular space. The protein resides in the extracellular matrix. This is Lumican (LUM) from Coturnix japonica (Japanese quail).